A 232-amino-acid polypeptide reads, in one-letter code: Large ribosomal subunit protein uL1 (232 aa).

It belongs to the universal ribosomal protein uL1 family. As to quaternary structure, part of the 50S ribosomal subunit.

Its function is as follows. Binds directly to 23S rRNA. The L1 stalk is quite mobile in the ribosome, and is involved in E site tRNA release. Functionally, protein L1 is also a translational repressor protein, it controls the translation of the L11 operon by binding to its mRNA. This Burkholderia cenocepacia (strain HI2424) protein is Large ribosomal subunit protein uL1.